A 287-amino-acid chain; its full sequence is Phospholipase A and acyltransferase 5 (287 aa).

2 disordered regions span residues 48-72 (PKQI…ASSQ) and 86-138 (DRGL…SNQK). 2 stretches are compositionally biased toward polar residues: residues 49-72 (KQIS…ASSQ) and 128-138 (LKNQAAESNQK). The LRAT domain occupies 144–257 (LIEIFRIGYE…LRYGVPRSQQ (114 aa)). Residues His154 and His166 contribute to the active site. Cys241 acts as the Acyl-thioester intermediate in catalysis.

The protein belongs to the H-rev107 family. Expressed in testis.

It localises to the cytoplasm. Its subcellular location is the cytosol. The enzyme catalyses a 1,2-diacyl-sn-glycero-3-phosphocholine + H2O = a 1-acyl-sn-glycero-3-phosphocholine + a fatty acid + H(+). The catalysed reaction is a 1,2-diacyl-sn-glycero-3-phosphocholine + H2O = a 2-acyl-sn-glycero-3-phosphocholine + a fatty acid + H(+). It carries out the reaction 1-hexadecanoyl-2-(5Z,8Z,11Z,14Z-eicosatetraenoyl)-sn-glycero-3-phosphocholine + 1,2-di-(9Z-octadecenoyl)-sn-glycero-3-phosphoethanolamine = N-(5Z,8Z,11Z,14Z-eicosatetraenoyl)-1,2-di-(9Z-octadecenoyl)-sn-glycero-3-phosphoethanolamine + 1-hexadecanoyl-sn-glycero-3-phosphocholine + H(+). It catalyses the reaction 1,2-di-(9Z-octadecenoyl)-sn-glycero-3-phosphoethanolamine + 1,2-dihexadecanoyl-sn-glycero-3-phosphocholine = N-hexadecanoyl-1,2-di-(9Z-octadecenoyl)-sn-glycero-3-phosphoethanolamine + 1-hexadecanoyl-sn-glycero-3-phosphocholine + H(+). The enzyme catalyses 1,2-di-(9Z-octadecenoyl)-sn-glycero-3-phosphoethanolamine + 1,2-dihexadecanoyl-sn-glycero-3-phosphocholine = N-hexadecanoyl-1,2-di-(9Z-octadecenoyl)-sn-glycero-3-phosphoethanolamine + 2-hexadecanoyl-sn-glycero-3-phosphocholine + H(+). The catalysed reaction is a 1,2-diacyl-sn-glycero-3-phosphoethanolamine + a 1,2-diacyl-sn-glycero-3-phosphocholine = an N-acyl-1,2-diacyl-sn-glycero-3-phosphoethanolamine + a 1-acyl-sn-glycero-3-phosphocholine + H(+). It carries out the reaction a 1,2-diacyl-sn-glycero-3-phosphoethanolamine + a 1,2-diacyl-sn-glycero-3-phosphocholine = an N-acyl-1,2-diacyl-sn-glycero-3-phosphoethanolamine + a 2-acyl-sn-glycero-3-phosphocholine + H(+). It catalyses the reaction 1-hexadecanoyl-2-(9Z-octadecenoyl)-sn-glycero-3-phosphocholine + 1,2-di-(9Z-octadecenoyl)-sn-glycero-3-phosphoethanolamine = N,1,2-tri-(9Z-octadecenoyl)-sn-glycero-3-phosphoethanolamine + 1-hexadecanoyl-sn-glycero-3-phosphocholine + H(+). Its function is as follows. Exhibits both phospholipase A1/2 and acyltransferase activities. Shows phospholipase A1 (PLA1) and A2 (PLA2) activity, catalyzing the calcium-independent release of fatty acids from the sn-1 or sn-2 position of glycerophospholipids. Shows N-acyltransferase activity, catalyzing the calcium-independent transfer of a fatty acyl group at the sn-1 position of phosphatidylcholine (PC) and other glycerophospholipids to the primary amine of phosphatidylethanolamine (PE), forming N-acylphosphatidylethanolamine (NAPE), which serves as precursor for N-acylethanolamines (NAEs). The sequence is that of Phospholipase A and acyltransferase 5 from Rattus norvegicus (Rat).